The sequence spans 306 residues: Grixazone synthase (306 aa).

Cu(2+) is bound by residues H39, H58, H67, H222, H226, and H248.

The protein belongs to the tyrosinase family. It depends on Cu(2+) as a cofactor.

It catalyses the reaction 2 3-amino-4-hydroxybenzoate + N-acetyl-L-cysteine + 2 O2 + H(+) = grixazone B + CO2 + 4 H2O. The catalysed reaction is 2 3-amino-4-hydroxybenzaldehyde + N-acetyl-L-cysteine + 2 O2 = grixazone A + formate + 3 H2O + H(+). It carries out the reaction 4 2-aminophenol + 3 O2 = 2 2-aminophenoxazin-3-one + 6 H2O. Its activity is regulated as follows. Inhibited by 3-amino-4-hydroxybenzensulfonic acid, 4-hydroxy-3-nitrobenzaldehyde, L-tyrosine, p-hydroxybenzaldehyde. Activated by the copper chaperone GriE. Its function is as follows. Involved in the biosynthesis of the parasiticide antibiotic grixazone. Catalyzes the oxidation of 3-amino-4-hydroxybenzoate (3,4-AHBOA) to yield the corresponding quinone imine which is then non-enzymatically conjugated with the thiol group of N-acetylcysteine. The resultant compound is oxidized to its quinone imine enzymatically and is then dimerized non-enzymatically with another quinone imine oxidized by GriF to yield grixazone B. 3-amino-4-hydroxybenzaldehyde (3,4-AHBAL) can also be used as substrate to yield grixazone A. In the grixazone biosynthetic pathway, it can also function as an o-aminophenol oxidase that catalyzes the formation of the phenoxazinone chromophore from alpha-aminophenol. It can also use 2-amino-4-methylphenol, and to a lesser extent, 3,4-dihydroxybenzaldehyde, catechol and 3,4-dihydroxy-L-phenylalanine (L-DOPA) as substrates. In contrast to tyrosinases, it does not display monophenolase activity. The protein is Grixazone synthase of Streptomyces griseus subsp. griseus (strain JCM 4626 / CBS 651.72 / NBRC 13350 / KCC S-0626 / ISP 5235).